The chain runs to 722 residues: Glycine--tRNA ligase beta subunit (722 aa).

It belongs to the class-II aminoacyl-tRNA synthetase family. Tetramer of two alpha and two beta subunits.

Its subcellular location is the cytoplasm. It carries out the reaction tRNA(Gly) + glycine + ATP = glycyl-tRNA(Gly) + AMP + diphosphate. The protein is Glycine--tRNA ligase beta subunit (glyS) of Xylella fastidiosa (strain 9a5c).